Consider the following 323-residue polypeptide: Aldo-keto reductase family 1 member C4 (323 aa).

NADP(+) is bound by residues 20–24 (GFGSY) and D50. Y55 (proton donor) is an active-site residue. H117 lines the substrate pocket. NADP(+)-binding positions include 166–167 (SN), Q190, 216–221 (HSALGT), and 270–280 (KSYNEQRIREN).

This sequence belongs to the aldo/keto reductase family. As to quaternary structure, monomer. As to expression, high expression in liver. Also expressed in kidney.

Its subcellular location is the cytoplasm. The protein resides in the cytosol. The enzyme catalyses chlordecone alcohol + NADP(+) = chlordecone + NADPH + H(+). It catalyses the reaction a 3alpha-hydroxysteroid + NADP(+) = a 3-oxosteroid + NADPH + H(+). The catalysed reaction is a 3alpha-hydroxysteroid + NAD(+) = a 3-oxosteroid + NADH + H(+). It carries out the reaction 5alpha-androstane-3alpha,17beta-diol + NADP(+) = 17beta-hydroxy-5alpha-androstan-3-one + NADPH + H(+). The enzyme catalyses 5alpha-androstane-3beta,17beta-diol + NADP(+) = 17beta-hydroxy-5alpha-androstan-3-one + NADPH + H(+). It catalyses the reaction 5alpha-androstane-3alpha,17beta-diol + NAD(+) = 17beta-hydroxy-5alpha-androstan-3-one + NADH + H(+). The catalysed reaction is 17beta-estradiol + NADP(+) = estrone + NADPH + H(+). It carries out the reaction 17beta-estradiol + NAD(+) = estrone + NADH + H(+). The enzyme catalyses (20S)-hydroxypregn-4-en-3-one + NADP(+) = progesterone + NADPH + H(+). It catalyses the reaction (20S)-hydroxypregn-4-en-3-one + NAD(+) = progesterone + NADH + H(+). The catalysed reaction is androsterone + NADP(+) = 5alpha-androstan-3,17-dione + NADPH + H(+). It carries out the reaction testosterone + NADP(+) = androst-4-ene-3,17-dione + NADPH + H(+). The enzyme catalyses testosterone + NAD(+) = androst-4-ene-3,17-dione + NADH + H(+). It catalyses the reaction 3alpha-hydroxy-5alpha-androstane 17-O-(beta-D-glucuronate) + NADP(+) = 5alpha-dihydrotestosterone 17-O-(beta-D-glucuronate) + NADPH + H(+). The catalysed reaction is (3beta,5alpha,17beta)-3-hydroxy-androstan-17-yl sulfate + NADP(+) = 5alpha-dihydrotestosterone sulfate + NADPH + H(+). It carries out the reaction 5alpha-androstane-3alpha,17beta-diol + NAD(+) = androsterone + NADH + H(+). The protein operates within steroid metabolism. Its activity is regulated as follows. Potently inhibited by benzbromarone, 3',3'',5',5''-tetrabromophenolphthalein (TBPP) and o-cresolphthalein. Functionally, cytosolic aldo-keto reductase that catalyzes the NADH and NADPH-dependent reduction of ketosteroids to hydroxysteroids. Liver specific enzyme that acts as an NAD(P)(H)-dependent 3-, 17- and 20-ketosteroid reductase on the steroid nucleus and side chain. Displays the ability to catalyze both oxidation and reduction in vitro, but most probably acts as a reductase in vivo since the oxidase activity measured in vitro is inhibited by physiological concentration of NADPH. Acts preferentially as a 3-alpha-hydroxysteroid dehydrogenase (HSD) with a subsidiary 3-beta-HSD activity. Catalyzes efficiently the transformation of the potent androgen 5-alpha-dihydrotestosterone (5alpha-DHT or 17beta-hydroxy-5alpha-androstan-3-one) into the less active form, 5-alpha-androstan-3-alpha,17-beta-diol (3-alpha-diol). Catalyzes the reduction of estrone into 17beta-estradiol but with low efficiency. Metabolizes a broad spectrum of natural and synthetic therapeutic steroid and plays an important role in metabolism of androgens, estrogens, progestereone and conjugated steroids. Catalyzes the biotransformation of the pesticide chlordecone (kepone) to its corresponding alcohol leading to increased biliary excretion of the pesticide and concomitant reduction of its neurotoxicity since bile is the major excretory route. The sequence is that of Aldo-keto reductase family 1 member C4 (AKR1C4) from Macaca fuscata fuscata (Japanese macaque).